We begin with the raw amino-acid sequence, 482 residues long: MAATVAVENLNPKVLKCEYAVRGEIVIHAQHLQQQLQTQPGSLPFDEILYCNIGNPQSLGQQPVTFFREVLALCDHPCLLEKEETKSLFSADAISRAKQILSTIPGRATGAYSHSQGIKGLRDAIAAGIASRDGFPANADDIFVTDGASPGVHMMMQLLIRNEKDGILCPIPQYPLYSASIALHGGTLVPYYLDEKTGWGLEISDLKKQLEDARSKGIDVRALVVINPGNPTGQVLAEDNQCDIVRFCKNEGLVLLADEVYQENIYVDDKKFNSFKKIARSVGYGEDDLPLVSFQSVSKGYYGECGKRGGYMEITGFSAPVREQIYKIASVNLCSNITGQILASLVMNPPKVGDESYAAYKAEKDGILQSLARRAKALEDAFNNLEGISCNKAEGAMYLFPQIHLPKKAIEAAKAANKAPDAFYALRLLESTGIVVVPGSGFGQVPGTWHIRCTILPQEDKIPAVITRFKAFHEAFMAEYRD.

At Lys299 the chain carries N6-(pyridoxal phosphate)lysine.

The protein belongs to the class-I pyridoxal-phosphate-dependent aminotransferase family. Alanine aminotransferase subfamily. Homodimer. Requires pyridoxal 5'-phosphate as cofactor. In terms of processing, the N-terminus is blocked. Mesophyll and bundle sheath cells.

It catalyses the reaction L-alanine + 2-oxoglutarate = pyruvate + L-glutamate. It participates in photosynthesis; C4 acid pathway. It functions in the pathway amino-acid degradation; L-alanine degradation via transaminase pathway; pyruvate from L-alanine: step 1/1. In terms of biological role, transfer of C3 units between the cytosol of mesophyll and bundle sheath cells to maintain a nitrogen-carbon balance in the C4-dicarboxylic pathway. This is Alanine aminotransferase 2 from Panicum miliaceum (Proso millet).